Reading from the N-terminus, the 940-residue chain is Reticulon-3 (940 aa).

Low complexity predominate over residues 1–24; that stretch reads MAESSAATQSPSVSSSSSGAEPST. 3 disordered regions span residues 1–32, 71–91, and 129–182; these read MAES…GGSP, SSEI…LGSH, and DIPC…ALDL. The residue at position 2 (alanine 2) is an N-acetylalanine. Residues 2 to 771 are Cytoplasmic-facing; it reads AESSAATQSP…KKTGFVFGTT (770 aa). Serine 31 is subject to Phosphoserine. Serine 196, serine 204, serine 209, serine 212, serine 249, and serine 282 each carry phosphoserine. 3 disordered regions span residues 314–335, 381–405, and 428–512; these read AKQQ…RSEH, KGYL…ISGS, and EVTE…LEGQ. Acidic residues predominate over residues 430 to 447; sequence TEVDSSGESDDTVIEDTT. Positions 472–490 are enriched in basic and acidic residues; the sequence is TSERENKETTSHETVRSEM. The segment covering 491–512 has biased composition (polar residues); the sequence is YENSEQQQAHAETPTQRSLEGQ. Position 508 is a phosphoserine (serine 508). Threonine 572 bears the Phosphothreonine mark. Serine 575, serine 576, and serine 652 each carry phosphoserine. Disordered stretches follow at residues 623-655 and 672-701; these read NKLS…SSDL and QVQA…SDIL. A compositionally biased stretch (polar residues) spans 689–699; the sequence is DPQSGPQNSSD. The Reticulon domain maps to 752–940; sequence VHDLIFWRDV…LPGIAKKKAE (189 aa). An intramembrane region (helical) is located at residues 772 to 795; the sequence is LIMLLSLAAFSVISVVSYLILALL. Over 796–852 the chain is Cytoplasmic; the sequence is SVTISFRVYKSVIQAVQKSEEGHPFKAYLDVDITLSSEAFHSYMNAAMVHVNKALKL. The segment at residues 853–875 is an intramembrane region (helical); it reads IIRLFLVEDLVDSLKLAVFMWLM. Residues 876-879 are Cytoplasmic-facing; that stretch reads TYVG. The segment at residues 880 to 902 is an intramembrane region (helical); sequence AVFNGITLLILAELLVFSVPIVY. The interval 895–940 is interaction with FADD; sequence VFSVPIVYEKYKTQIDHYVGIARDQTKSIVEKIQAKLPGIAKKKAE. Residues 903-940 are Cytoplasmic-facing; it reads EKYKTQIDHYVGIARDQTKSIVEKIQAKLPGIAKKKAE. The tract at residues 908–910 is interaction with BACE1; the sequence is QID.

As to quaternary structure, homodimer. Interacts with RTN4. Isoform 2 interacts with BACE1, BACE2, BCL2 and FADD. Interacts with ATL2. Interacts with TMEM33. Interacts with ATL1. Interacts with ZFYVE27 and with KIF5A in a ZFYVE27-dependent manner. Interacts with RIGI. Interacts with TRIM25. Present in olfactory bulb, olfactory epithelium and retina (at protein level).

It is found in the endoplasmic reticulum membrane. The protein localises to the golgi apparatus membrane. Its function is as follows. May be involved in membrane trafficking in the early secretory pathway. Inhibits BACE1 activity and amyloid precursor protein processing. May induce caspase-8 cascade and apoptosis. May favor BCL2 translocation to the mitochondria upon endoplasmic reticulum stress. Induces the formation of endoplasmic reticulum tubules. Acts also as an inflammation-resolving regulator by interacting with both TRIM25 and RIGI, subsequently impairing RIGI 'Lys-63'-linked polyubiquitination leading to IRF3 and NF-kappa-B inhibition. The protein is Reticulon-3 (Rtn3) of Rattus norvegicus (Rat).